The sequence spans 372 residues: MGDDEARSWIRGDETAKQMLSRVLKDRAFLLIPPLHRVPLRAGNVVEITGASTSAKTQILIQAAISCILPKTWNGIHYGGLGKLVLFLDLDCRFDVLRLSQMLKHRLLQANWLGNGAWWQLEESNVKSCKSAEEKTKTVFDEELYASCMKRFLYVRCYDSLELLSSLKTLHYRIQQQEACGSQVGVLMIDSIGAFHWTDRLSSSLALETHNRKSLSLTNVVETIVQELKKLLLVHSLVVLATKGTIYEEKYPANENNRKVSSNDHFSGNVASKAQQPPFREFMPSSWQAFVTHKIIIRKSADYQSLQTGQQNLLAYSLEWLQPQLSRIDRFIVDDVRKLTTIKPFYSKLLLIYIVIPASSSHAVWYCHCLVT.

This sequence belongs to the RecA family. RAD51 subfamily.

Its subcellular location is the nucleus. Its function is as follows. Involved in the homologous recombination repair (HRR) pathway of double-stranded DNA, thought to repair chromosomal fragmentation, translocations and deletions. This is DNA repair protein XRCC2 homolog (XRCC2) from Arabidopsis thaliana (Mouse-ear cress).